Reading from the N-terminus, the 348-residue chain is Organic solute transporter alpha-like protein 3 (348 aa).

Over 1-49 the chain is Extracellular; that stretch reads MAKEHGAMRSVLNLIGSVMLPQDTSNCSDRHDTPSAPEFLSHLQPFQTV. Asparagine 26 is a glycosylation site (N-linked (GlcNAc...) asparagine). A helical transmembrane segment spans residues 50-70; that stretch reads LLSIASFSTTIVLCLSLIHWF. Residues 71–84 are Cytoplasmic-facing; the sequence is YVYKYVSIEKRRNK. Residues 85 to 105 traverse the membrane as a helical segment; that stretch reads LYWLIAVFPVACSCSFIAMCV. The Extracellular portion of the chain corresponds to 106–109; sequence PRTA. Residues 110-130 form a helical membrane-spanning segment; it reads VILTCIGVLYYLMCLFVIVSL. Topologically, residues 131-180 are cytoplasmic; the sequence is ARHLFGGRESFSTCLQYDDRPIDFRSPPFCCIIPKLPTARSTEKNIRRLE. The chain crosses the membrane as a helical span at residues 181–201; the sequence is WCVLQAPIVRSIIIFLDVVAV. The Extracellular segment spans residues 202–213; it reads AEMREDATPYIR. The helical transmembrane segment at 214-234 threads the bilayer; that stretch reads YSDMASLCSLLLAIFGVHTLA. The Cytoplasmic segment spans residues 235-240; the sequence is RVTSNK. A helical transmembrane segment spans residues 241-261; sequence LSAYCFMSMFRLVDISLLFFS. Residues 262 to 291 are Extracellular-facing; it reads AQQPMIFQNVLLRFNLISCGPLLNAQENAY. The helical transmembrane segment at 292–312 threads the bilayer; the sequence is FVCNFIITCEMLLLSVLATWL. At 313–348 the chain is on the cytoplasmic side; the sequence is LAPRHNAMFDAYRPSMALSETTASLNETEQSMILDH.

This sequence belongs to the OST-alpha family.

Its subcellular location is the cell membrane. Functionally, probable transporter. This Caenorhabditis elegans protein is Organic solute transporter alpha-like protein 3 (osta-3).